The sequence spans 619 residues: 1-deoxy-D-xylulose-5-phosphate synthase (619 aa).

Residues His74 and 115-117 (GHS) each bind thiamine diphosphate. Position 146 (Asp146) interacts with Mg(2+). Thiamine diphosphate is bound by residues 147–148 (GA), Asn175, Tyr285, and Glu365. A Mg(2+)-binding site is contributed by Asn175.

Belongs to the transketolase family. DXPS subfamily. In terms of assembly, homodimer. Requires Mg(2+) as cofactor. Thiamine diphosphate is required as a cofactor.

It catalyses the reaction D-glyceraldehyde 3-phosphate + pyruvate + H(+) = 1-deoxy-D-xylulose 5-phosphate + CO2. Its pathway is metabolic intermediate biosynthesis; 1-deoxy-D-xylulose 5-phosphate biosynthesis; 1-deoxy-D-xylulose 5-phosphate from D-glyceraldehyde 3-phosphate and pyruvate: step 1/1. Catalyzes the acyloin condensation reaction between C atoms 2 and 3 of pyruvate and glyceraldehyde 3-phosphate to yield 1-deoxy-D-xylulose-5-phosphate (DXP). The protein is 1-deoxy-D-xylulose-5-phosphate synthase of Clostridium perfringens (strain SM101 / Type A).